A 149-amino-acid chain; its full sequence is 3-dehydroquinate dehydratase (149 aa).

Catalysis depends on Tyr26, which acts as the Proton acceptor. Substrate-binding residues include Asn78, His84, and Asp91. Residue His104 is the Proton donor of the active site. Residues 105–106 (LS) and Arg115 each bind substrate.

The protein belongs to the type-II 3-dehydroquinase family. As to quaternary structure, homododecamer.

It catalyses the reaction 3-dehydroquinate = 3-dehydroshikimate + H2O. The protein operates within metabolic intermediate biosynthesis; chorismate biosynthesis; chorismate from D-erythrose 4-phosphate and phosphoenolpyruvate: step 3/7. Catalyzes a trans-dehydration via an enolate intermediate. This chain is 3-dehydroquinate dehydratase, found in Polynucleobacter necessarius subsp. necessarius (strain STIR1).